Consider the following 664-residue polypeptide: Cytoskeleton-associated protein 2 (664 aa).

The tract at residues M1–Q38 is disordered. Residues T28 to Q38 show a composition bias toward basic and acidic residues. Residues P160–S319 are association with alpha- and beta-tubulin. S186 carries the post-translational modification Phosphoserine. Disordered stretches follow at residues I254–L273, L283–P328, G366–G393, and A512–V545. Polar residues predominate over residues G300–I309. Residues G366–P375 show a composition bias toward basic residues. A compositionally biased stretch (basic and acidic residues) spans P533–V545. T561 is modified (phosphothreonine). The residue at position 577 (S577) is a Phosphoserine. T579 bears the Phosphothreonine mark. Position 584 is a phosphoserine (S584).

The protein belongs to the CKAP2 family. In terms of assembly, associates with alpha- and beta-tubulins.

The protein localises to the cytoplasm. It localises to the cytoskeleton. The protein resides in the spindle. It is found in the spindle pole. Possesses microtubule stabilizing properties. Involved in regulating aneuploidy, cell cycling, and cell death in a p53-dependent manner. The chain is Cytoskeleton-associated protein 2 from Mus musculus (Mouse).